Here is a 490-residue protein sequence, read N- to C-terminus: MDPVLVLVLTLSCLLLLSLWRQNSGRGKLPPGPTPFPIIGNILQIDIKNISKSFNYFSKVYGPVFTLYFGSKPTVVVHGYEAVKEALDDLGEEFSGRGSFQIFERINNDLGVIFSNGTKWKELRRFSIMTLRSFGMGKRSIEDRIQEEASCLVEELRKANGSLCDPTFILSCAPSNVICSVIFHNRFDYKDEKFLNLMERLNENFKILNSPWMQVYNALPTLINYLPGSHNKVIKNFTEIKSYILGRVKEHQETLDMDNPRDFIDCFLIKMEQEKHNPHSEFTIESLMATVTDIFVAGTETTNITLRYGLLLLLKHTEVTAKVQAEIDHVIGRHRSPCMQDRTRMPYTDAMVHEIQRYIDLIPNNVPHAATCNVRFRSYFIPKGTELVTSLTSVLHDDKEFPNPEVFDPGHFLDENGNFKKSDYFMPFSIGKRMCVGEALARTELFLILTTILQNFNLKSLVDTKDIDTTPVANTFGRVPPSYQLYFIPR.

Heme is bound at residue Cys-435.

It belongs to the cytochrome P450 family. Heme is required as a cofactor. As to expression, highest level in colon. Low levels in liver and small intestine.

It is found in the endoplasmic reticulum membrane. It localises to the microsome membrane. The catalysed reaction is an organic molecule + reduced [NADPH--hemoprotein reductase] + O2 = an alcohol + oxidized [NADPH--hemoprotein reductase] + H2O + H(+). Metabolizes arachidonic acid mainly to 19-hydroxyeicosatetraenoic acid (HETE). This chain is Cytochrome P450 2C55, found in Mus musculus (Mouse).